An 812-amino-acid chain; its full sequence is Valine--tRNA ligase (812 aa).

Positions 46–56 match the 'HIGH' region motif; it reads PTVSGQLHIGH. The short motif at 536 to 540 is the 'KMSKS' region element; it reads KMSKS. Lys-539 serves as a coordination point for ATP.

The protein belongs to the class-I aminoacyl-tRNA synthetase family. ValS type 2 subfamily. In terms of assembly, monomer.

Its subcellular location is the cytoplasm. The enzyme catalyses tRNA(Val) + L-valine + ATP = L-valyl-tRNA(Val) + AMP + diphosphate. In terms of biological role, catalyzes the attachment of valine to tRNA(Val). As ValRS can inadvertently accommodate and process structurally similar amino acids such as threonine, to avoid such errors, it has a 'posttransfer' editing activity that hydrolyzes mischarged Thr-tRNA(Val) in a tRNA-dependent manner. The polypeptide is Valine--tRNA ligase (Rickettsia conorii (strain ATCC VR-613 / Malish 7)).